We begin with the raw amino-acid sequence, 290 residues long: MATLRVLLSCVRGPLRPPVRCPAWRPFASGANFEYIIAEKRGKNNTVGLIQLNRPKALNALCDGLIDELNQALKIFEEDPAVGAIVLTGGDKAFAAGADIKEMQNLSFQDCYSSKFLKHWDHLTQIKKPVIAAVNGYAFGGGCELAMMCDIIYAGEKAQFAQPEILIGTIPGAGGTQRLTRTVGKSLAMEMVLTGDRISAQDAKQAGLVSKICPVETLVEEAIQCAEKIASNSKIIAAMAKESVNAAFEMTLAEGSKLEKKLFYSTFATNDRKEGMTAFVEKRKANFKDQ.

A mitochondrion-targeting transit peptide spans 1–27 (MATLRVLLSCVRGPLRPPVRCPAWRPF). A Phosphothreonine modification is found at Thr46. Residue 98 to 101 (ADIK) participates in substrate binding. An N6-acetyllysine; alternate modification is found at Lys101. N6-succinyllysine; alternate is present on Lys101. Ser114 carries the post-translational modification Phosphoserine. An N6-acetyllysine; alternate modification is found at Lys115. Lys115 carries the post-translational modification N6-succinyllysine; alternate. Lys118 is modified (N6-acetyllysine). Gly141 contacts substrate. Lys204 is modified (N6-succinyllysine). At Lys211 the chain carries N6-acetyllysine.

This sequence belongs to the enoyl-CoA hydratase/isomerase family. As to quaternary structure, homohexamer; dimer of trimers.

The protein localises to the mitochondrion matrix. The catalysed reaction is a (3S)-3-hydroxyacyl-CoA = a (2E)-enoyl-CoA + H2O. The enzyme catalyses a (3E)-enoyl-CoA = a 4-saturated (2E)-enoyl-CoA. It carries out the reaction (3E)-hexenoyl-CoA = (2E)-hexenoyl-CoA. It catalyses the reaction (3S)-3-hydroxybutanoyl-CoA = (2E)-butenoyl-CoA + H2O. The catalysed reaction is 3-hydroxyisovaleryl-CoA = 3-methylbut-2-enoyl-CoA + H2O. The enzyme catalyses 3-hydroxypropanoyl-CoA = acryloyl-CoA + H2O. It carries out the reaction 3-hydroxybutanoyl-CoA = (2E)-butenoyl-CoA + H2O. It catalyses the reaction 2-methylpropenoyl-CoA + H2O = (S)-3-hydroxyisobutanoyl-CoA. The catalysed reaction is (3S)-hydroxyhexanoyl-CoA = (2E)-hexenoyl-CoA + H2O. The enzyme catalyses (3S)-hydroxydecanoyl-CoA = (2E)-decenoyl-CoA + H2O. Its pathway is lipid metabolism; fatty acid beta-oxidation. In terms of biological role, converts unsaturated trans-2-enoyl-CoA species ((2E)-enoyl-CoA) to the corresponding (3S)-3-hydroxyacyl-CoA species through addition of a water molecule to the double bond. Catalyzes the hydration of medium- and short-chained fatty enoyl-CoA thioesters from 4 carbons long (C4) up to C16. Has high substrate specificity for crotonyl-CoA ((2E)-butenoyl-CoA) and moderate specificity for acryloyl-CoA, 3-methylcrotonyl-CoA (3-methyl-(2E)-butenoyl-CoA) and methacrylyl-CoA ((2E)-2-methylpropenoyl-CoA). Can bind tiglyl-CoA (2-methylcrotonoyl-CoA), but hydrates only a small amount of this substrate. Plays a key role in the beta-oxidation spiral of short- and medium-chain fatty acid oxidation. At a lower rate than the hydratase reaction, catalyzes the isomerase reaction of trans-3-enoyl-CoA species (such as (3E)-hexenoyl-CoA) to trans-2-enoyl-CoA species (such as (2E)-hexenoyl-CoA), which are subsequently hydrated to 3(S)-3-hydroxyacyl-CoA species (such as (3S)-hydroxyhexanoyl-CoA). The chain is Enoyl-CoA hydratase, mitochondrial (ECHS1) from Pongo abelii (Sumatran orangutan).